The following is a 270-amino-acid chain: MGETIRLTGVHETLLATLQARALDNRQPRPVLGDATAEELLRRIDYDFSRIRTATKDMRIVTFRARKLDEWAGRFLAVHPDAVVLHLACGLDSRAFRMDVPDTVEWIDVDVPDVIELRSRLYPERDGYRMIGASVTTEDWLDTVPRNRPALVVAEGLTPYLREADGEEMLRRVIRHLPTGAVMFDAVLPWTLRFAKYSQLLRATGATFGWGIGNPRSLESRVPGLRFQEQWSMLDSPFLADARPVEKWVGAGMRSIPQLRFAHRLLRYTF.

The protein operates within antibiotic biosynthesis; tetracenomycin C biosynthesis. Its function is as follows. O-methyltransferase that catalyzes the methylation of the C-9 carboxy group of tetracenomycin E (TCM E) to yield TCM A2. Catalyzes as well the following side reactions: methylation of 8-O-methyl-TCM D3 to 9-carboxymethyl-8-O-methyl-TCM D3; and of TCM B3 to 9-carboxymethyl-TCM B3. The sequence is that of Tetracenomycin polyketide synthesis O-methyltransferase TcmP (tcmP) from Streptomyces glaucescens.